Reading from the N-terminus, the 456-residue chain is Bifunctional protein GlmU (456 aa).

Residues 1–229 (MTKKALSAVI…VMEVEGANNR (229 aa)) form a pyrophosphorylase region. UDP-N-acetyl-alpha-D-glucosamine-binding positions include 11–14 (LAAG), lysine 25, glutamine 76, 81–82 (GT), 103–105 (YGD), glycine 140, glutamate 154, asparagine 169, and asparagine 227. Mg(2+) is bound at residue aspartate 105. Position 227 (asparagine 227) interacts with Mg(2+). Residues 230–250 (LQLAALERYFQNKQASKLLLE) are linker. The tract at residues 251 to 456 (GVMIYDPARF…QGWQRPIKKK (206 aa)) is N-acetyltransferase. 2 residues coordinate UDP-N-acetyl-alpha-D-glucosamine: arginine 333 and lysine 351. Catalysis depends on histidine 363, which acts as the Proton acceptor. UDP-N-acetyl-alpha-D-glucosamine is bound by residues tyrosine 366 and asparagine 377. Residues alanine 380, 386 to 387 (NY), serine 405, alanine 423, and arginine 440 contribute to the acetyl-CoA site.

This sequence in the N-terminal section; belongs to the N-acetylglucosamine-1-phosphate uridyltransferase family. In the C-terminal section; belongs to the transferase hexapeptide repeat family. In terms of assembly, homotrimer. Mg(2+) is required as a cofactor.

It is found in the cytoplasm. The catalysed reaction is alpha-D-glucosamine 1-phosphate + acetyl-CoA = N-acetyl-alpha-D-glucosamine 1-phosphate + CoA + H(+). The enzyme catalyses N-acetyl-alpha-D-glucosamine 1-phosphate + UTP + H(+) = UDP-N-acetyl-alpha-D-glucosamine + diphosphate. It functions in the pathway nucleotide-sugar biosynthesis; UDP-N-acetyl-alpha-D-glucosamine biosynthesis; N-acetyl-alpha-D-glucosamine 1-phosphate from alpha-D-glucosamine 6-phosphate (route II): step 2/2. The protein operates within nucleotide-sugar biosynthesis; UDP-N-acetyl-alpha-D-glucosamine biosynthesis; UDP-N-acetyl-alpha-D-glucosamine from N-acetyl-alpha-D-glucosamine 1-phosphate: step 1/1. It participates in bacterial outer membrane biogenesis; LPS lipid A biosynthesis. Its function is as follows. Catalyzes the last two sequential reactions in the de novo biosynthetic pathway for UDP-N-acetylglucosamine (UDP-GlcNAc). The C-terminal domain catalyzes the transfer of acetyl group from acetyl coenzyme A to glucosamine-1-phosphate (GlcN-1-P) to produce N-acetylglucosamine-1-phosphate (GlcNAc-1-P), which is converted into UDP-GlcNAc by the transfer of uridine 5-monophosphate (from uridine 5-triphosphate), a reaction catalyzed by the N-terminal domain. This is Bifunctional protein GlmU from Haemophilus influenzae (strain 86-028NP).